The sequence spans 977 residues: Short transient receptor potential channel 4 (977 aa).

Over 1–324 (MAQFYYKRNV…YDEFPGWRRR (324 aa)) the chain is Cytoplasmic. 4 ANK repeats span residues 29–60 (LSPSEKAYLNAVEKGDYASVKKSLEEAEIYFK), 71–93 (RTALLIAIENENLELIELLLSFN), 96–118 (VGDALLHAIRKEVVGAVELLLNH), and 141–165 (PDITPIILAAHTNNYEIIKLLVQKG). Zn(2+)-binding residues include H172, C176, C178, and C181. Residues 223-260 (LSWELQELSKVENEFKSEYEELSRQCKQFAKDLLDQTR) are a coiled coil. Positions 325-359 (HWAVKMVTCFIIGLLFPVFSVCYLIAPKSPLGLFI) form an intramembrane region, discontinuously helical. Over 360–362 (RKP) the chain is Cytoplasmic. Residues 363–383 (FIKFICHTASYLTFLFLLLLA) form a helical membrane-spanning segment. At 384–403 (SQHIDRSDLNRQGPPPTIVE) the chain is on the extracellular side. The helical transmembrane segment at 404–418 (WMILPWVLGFIWGEI) threads the bilayer. Ca(2+)-binding residues include E417, Q420, N435, and D438. Residues 419-432 (KQMWDGGLQDYIHD) are Cytoplasmic-facing. The chain crosses the membrane as a helical span at residues 433–453 (WWNLMDFVMNSLYLATISLKI). Topologically, residues 454-475 (VAFVKYSALNPRESWDMWHPTL) are extracellular. The chain crosses the membrane as a helical span at residues 476 to 498 (VAEALFAIANIFSSLRLISLFTA). Over 499–511 (NSHLGPLQISLGR) the chain is Cytoplasmic. A helical membrane pass occupies residues 512-534 (MLLDILKFLFIYCLVLLAFANGL). Over 535–599 (NQLYFYYEET…HEFTDFVGAT (65 aa)) the chain is Extracellular. Residues C549 and C554 are joined by a disulfide bond. A helical transmembrane segment spans residues 600–620 (MFGTYNVISLVVLLNMLIAMM). The tract at residues 615–977 (MLIAMMNNSY…AHEDYVTTRL (363 aa)) is interaction with ITPR1, ITPR2 and ITPR3. The Cytoplasmic portion of the chain corresponds to 621-977 (NNSYQLIADH…AHEDYVTTRL (357 aa)). Residues 767 to 790 (AASSASSADSDEKSHSEGNGKDKR) are disordered. The segment covering 776–787 (SDEKSHSEGNGK) has biased composition (basic and acidic residues). Phosphotyrosine; by FYN is present on residues Y959 and Y972. Residues 975 to 977 (TRL) form a PDZ-binding domain region.

The protein belongs to the transient receptor (TC 1.A.4) family. STrpC subfamily. TRPC4 sub-subfamily. Homotetramer. Heterotetramer with TRPC1 and/or TRPC5. Forms a heteromeric ion channel with TRPC1, with a 1:3 TRPC1:TRPC4 stoichiometry. Interacts with TRPC4AP. Isoform alpha but not isoform beta interacts with ITPR1, ITPR2 and ITPR3. Interacts with NHERF1. Interacts with MX1 and RNF24. Interacts (via CIRB domain) with SESTD1 (via the spectrin 1 repeat) and SPTBN5 (via C-terminus). Interacts with CDH5 and CTNNB1. Interacts (via protein 4.1-binding domain) with EPB41L2. Interacts with PLSCR1.

Its subcellular location is the cell membrane. It catalyses the reaction Ca(2+)(in) = Ca(2+)(out). The enzyme catalyses Na(+)(in) = Na(+)(out). It carries out the reaction Li(+)(in) = Li(+)(out). The catalysed reaction is Cs(+)(in) = Cs(+)(out). Its activity is regulated as follows. May be operated by a phosphatidylinositol second messenger system activated by receptor tyrosine kinases or G-protein coupled receptors. May be activated by intracellular calcium store depletion. Functionally, forms a receptor-activated non-selective calcium permeant cation channel. Acts as a cell-cell contact-dependent endothelial calcium entry channel. Forms a homomeric ion channel or a heteromeric ion channel with TRPC1; the heteromeric ion channel has reduced calcium permeability compared to the homomeric channel. Also permeable to monovalent ions including sodium, lithium and cesium ions. In terms of biological role, forms a non-selective a receptor-activated calcium permeant cation channel. Probably is operated by a phosphatidylinositol second messenger system activated by receptor tyrosine kinases or G-protein coupled receptors. In Rattus norvegicus (Rat), this protein is Short transient receptor potential channel 4 (Trpc4).